The chain runs to 336 residues: GTP 3',8-cyclase (336 aa).

The Radical SAM core domain occupies 16–241; it reads AYRRTYYYLR…QSKGITDGPA (226 aa). Arg25 lines the GTP pocket. [4Fe-4S] cluster is bound by residues Cys32 and Cys36. Tyr38 contributes to the S-adenosyl-L-methionine binding site. Cys39 serves as a coordination point for [4Fe-4S] cluster. Arg75 contacts GTP. Gly79 is an S-adenosyl-L-methionine binding site. Thr106 serves as a coordination point for GTP. Position 130 (Ser130) interacts with S-adenosyl-L-methionine. Lys167 lines the GTP pocket. Met201 is an S-adenosyl-L-methionine binding site. Residues Cys264 and Cys267 each coordinate [4Fe-4S] cluster. 269 to 271 is a GTP binding site; it reads RLR. Position 281 (Cys281) interacts with [4Fe-4S] cluster.

This sequence belongs to the radical SAM superfamily. MoaA family. As to quaternary structure, monomer and homodimer. [4Fe-4S] cluster serves as cofactor.

The catalysed reaction is GTP + AH2 + S-adenosyl-L-methionine = (8S)-3',8-cyclo-7,8-dihydroguanosine 5'-triphosphate + 5'-deoxyadenosine + L-methionine + A + H(+). Its pathway is cofactor biosynthesis; molybdopterin biosynthesis. Its function is as follows. Catalyzes the cyclization of GTP to (8S)-3',8-cyclo-7,8-dihydroguanosine 5'-triphosphate. This Actinobacillus succinogenes (strain ATCC 55618 / DSM 22257 / CCUG 43843 / 130Z) protein is GTP 3',8-cyclase.